Here is a 57-residue protein sequence, read N- to C-terminus: uncharacterized protein (57 aa).

Positions 1–22 (MNEIIITIIVLILLLFITLSRN) are cleaved as a signal peptide. Positions 26 to 57 (NNQSNNGKKEKLIKCKKEVQQLRQKLDQLTFQ) form a coiled coil.

This is an uncharacterized protein from Acheta domesticus (House cricket).